The chain runs to 366 residues: NADH-quinone oxidoreductase subunit H (366 aa).

A run of 8 helical transmembrane segments spans residues 27-47 (LLLI…LTFA), 99-119 (FLFL…WAVV), 134-154 (LLYI…AGWA), 168-188 (AAQV…VLMM), 206-226 (FLNW…ISGV), 268-288 (ILVA…PVDI), 294-314 (IPGM…FLWF), and 329-349 (LGWK…GMVM).

Belongs to the complex I subunit 1 family. In terms of assembly, NDH-1 is composed of 14 different subunits. Subunits NuoA, H, J, K, L, M, N constitute the membrane sector of the complex.

It localises to the cell inner membrane. The enzyme catalyses a quinone + NADH + 5 H(+)(in) = a quinol + NAD(+) + 4 H(+)(out). In terms of biological role, NDH-1 shuttles electrons from NADH, via FMN and iron-sulfur (Fe-S) centers, to quinones in the respiratory chain. The immediate electron acceptor for the enzyme in this species is believed to be ubiquinone. Couples the redox reaction to proton translocation (for every two electrons transferred, four hydrogen ions are translocated across the cytoplasmic membrane), and thus conserves the redox energy in a proton gradient. This subunit may bind ubiquinone. The sequence is that of NADH-quinone oxidoreductase subunit H from Nitrosomonas europaea (strain ATCC 19718 / CIP 103999 / KCTC 2705 / NBRC 14298).